Here is a 306-residue protein sequence, read N- to C-terminus: Putative NylC-analogous protein (306 aa).

This sequence belongs to the peptidase S58 family.

The sequence is that of Putative NylC-analogous protein from Agromyces sp. (strain KY5R).